Reading from the N-terminus, the 408-residue chain is Hepatocyte nuclear factor 4-gamma (408 aa).

Residues 9–84 (NCLCAICGDR…AGMKKEAVQN (76 aa)) constitute a DNA-binding region (nuclear receptor). 2 consecutive NR C4-type zinc fingers follow at residues 12-32 (CAIC…CDGC) and 48-72 (CRFS…LRKC). At S94 the chain carries Phosphoserine. The 230-residue stretch at 99 to 328 (SNIPSINTLA…NLLQEMLLGG (230 aa)) folds into the NR LBD domain. The interval 369-408 (ATPETPLPSPPQGSGQEPYKITANQASVISHQSLSKQKQL) is disordered. Phosphothreonine occurs at positions 370 and 373. S377 is subject to Phosphoserine. The segment covering 390-408 (TANQASVISHQSLSKQKQL) has biased composition (polar residues).

The protein belongs to the nuclear hormone receptor family. NR2 subfamily.

Its subcellular location is the nucleus. Transcription factor. Has a lower transcription activation potential than HNF4-alpha. In Mus musculus (Mouse), this protein is Hepatocyte nuclear factor 4-gamma (Hnf4g).